The primary structure comprises 159 residues: SsrA-binding protein (159 aa).

Residues 133–159 (KKLHDKRETSKERDWNRQKNRLLKERG) are disordered. Residues 137–159 (DKRETSKERDWNRQKNRLLKERG) are compositionally biased toward basic and acidic residues.

It belongs to the SmpB family.

It is found in the cytoplasm. Its function is as follows. Required for rescue of stalled ribosomes mediated by trans-translation. Binds to transfer-messenger RNA (tmRNA), required for stable association of tmRNA with ribosomes. tmRNA and SmpB together mimic tRNA shape, replacing the anticodon stem-loop with SmpB. tmRNA is encoded by the ssrA gene; the 2 termini fold to resemble tRNA(Ala) and it encodes a 'tag peptide', a short internal open reading frame. During trans-translation Ala-aminoacylated tmRNA acts like a tRNA, entering the A-site of stalled ribosomes, displacing the stalled mRNA. The ribosome then switches to translate the ORF on the tmRNA; the nascent peptide is terminated with the 'tag peptide' encoded by the tmRNA and targeted for degradation. The ribosome is freed to recommence translation, which seems to be the essential function of trans-translation. This chain is SsrA-binding protein, found in Sinorhizobium medicae (strain WSM419) (Ensifer medicae).